The sequence spans 697 residues: Sentrin-specific protease (697 aa).

Residues 1–14 show a composition bias toward basic and acidic residues; that stretch reads MSRRSDLSDKDSQS. Disordered regions lie at residues 1 to 47 and 365 to 387; these read MSRR…QGLG and SEES…SDSY. The Nuclear localization signal signature appears at 15 to 19; sequence RKRHW. The short motif at 462-467 is the Nuclear localization signal element; the sequence is KVEKKK. Residues 501-664 are protease; sequence IQICKKDLAT…VFSCQFGEWA (164 aa). Active-site residues include histidine 585, aspartate 602, and cysteine 653.

The protein belongs to the peptidase C48 family.

The protein resides in the nucleus envelope. Protease that deconjugates smo-1 from targeted proteins and may catalyze the processing of smo-1 to its mature form. This is Sentrin-specific protease (ulp-1) from Caenorhabditis elegans.